Here is a 493-residue protein sequence, read N- to C-terminus: Insulinoma-associated protein 2 (493 aa).

Residues 1–12 (MPRGFLVKRTKR) are compositionally biased toward basic residues. An SNAG domain region spans residues 1-20 (MPRGFLVKRTKRSGSSYRAR). The tract at residues 1-77 (MPRGFLVKRT…PGPSPARPAG (77 aa)) is disordered. A C2H2-type 1; atypical zinc finger spans residues 203–223 (FICQLCKHQYADPFALAQHRC). The C2H2-type 2 zinc finger occupies 231–253 (YRCPECDKVFSCPANLASHRRWH). The segment at 248–310 (SHRRWHKPRP…SGDGQHRDSA (63 aa)) is disordered. The span at 267-276 (PHAPLTPPDP) shows a compositional bias: pro residues. The segment covering 283-294 (ENGRVPRTDDQH) has biased composition (basic and acidic residues). C2H2-type zinc fingers lie at residues 354-376 (FVCP…LGTH), 398-420 (FACP…RLWH), and 452-475 (FSCK…NKCH).

Expressed in spleen, stomach, liver, kidney and testis. In the pancreas, expressed in islet cells, including insulin-producing beta-cells, but not in acinar cells (at protein level). In the brain, expressed in the neuronal cells of the cerebral cortex, the Purkinje cells of the cerebellum and the hippocampal region including CA1 and CA3 (at protein level).

It is found in the cytoplasm. The protein localises to the nucleus. In terms of biological role, may function as a growth suppressor or tumor suppressor in liver cells and in certain neurons. This Mus musculus (Mouse) protein is Insulinoma-associated protein 2 (Insm2).